The following is a 271-amino-acid chain: NAD kinase (271 aa).

Residue Asp64 is the Proton acceptor of the active site. NAD(+) is bound by residues 64 to 65, Arg69, 132 to 133, Lys143, Arg160, Asp162, 173 to 178, Ala197, and Gln231; these read DG, NE, and TAYAMS.

Belongs to the NAD kinase family. A divalent metal cation is required as a cofactor.

It is found in the cytoplasm. It catalyses the reaction NAD(+) + ATP = ADP + NADP(+) + H(+). Involved in the regulation of the intracellular balance of NAD and NADP, and is a key enzyme in the biosynthesis of NADP. Catalyzes specifically the phosphorylation on 2'-hydroxyl of the adenosine moiety of NAD to yield NADP. The protein is NAD kinase of Methanocorpusculum labreanum (strain ATCC 43576 / DSM 4855 / Z).